Reading from the N-terminus, the 138-residue chain is Ig heavy chain V region TEPC 1017 (138 aa).

The signal sequence occupies residues 1–20; the sequence is MGWSYIILFLVATATDVHSQ. Positions 21 to 49 are framework-1; it reads VQLQQPGAELVKPGASVQLSCKASGHTFT. An intrachain disulfide couples C41 to C115. Positions 50 to 54 are complementarity-determining-1; that stretch reads NYWIH. The interval 55 to 68 is framework-2; it reads WVKQRPGQGLEWIG. A complementarity-determining-2 region spans residues 69 to 85; that stretch reads EINPNDGRSNYNEKFKN. Residues 86 to 117 form a framework-3 region; sequence KATLTVDKSSSTAYMQLSSLTPEEFAVYYCAR. The complementarity-determining-3 stretch occupies residues 118-127; it reads SDGYYDWFVY. The interval 128 to 138 is framework-4; that stretch reads WGQGTLVTFSA.

This is Ig heavy chain V region TEPC 1017 from Mus musculus (Mouse).